Consider the following 447-residue polypeptide: Alliin lyase (447 aa).

The propeptide occupies 1–2 (QA). One can recognise an EGF-like; atypical domain in the interval 15–61 (EAVANINCSGHGRAFLDGILSDGSPKCECNTCYTGADCSQKITGCSA). Asn-21 carries N-linked (GlcNAc...) asparagine glycosylation. Disulfide bonds link Cys-22–Cys-41, Cys-43–Cys-52, and Cys-46–Cys-59. 94–102 (YFFNPVSNF) lines the chloride pocket. Asn-148 and Asn-193 each carry an N-linked (GlcNAc...) asparagine glycan. Position 253 is an N6-(pyridoxal phosphate)lysine (Lys-253). Asn-330 carries N-linked (GlcNAc...) asparagine glycosylation. Residues Cys-370 and Cys-378 are joined by a disulfide bond.

This sequence belongs to the alliinase family. As to quaternary structure, homodimer. Pyridoxal 5'-phosphate serves as cofactor.

The protein resides in the vacuole. It carries out the reaction an S-alkyl-L-cysteine S-oxide = an S-alkyl sulfenate + 2-aminoprop-2-enoate. This Allium cepa var. aggregatum (Shallot) protein is Alliin lyase.